Reading from the N-terminus, the 903-residue chain is DNA transposase THAP9 (903 aa).

The THAP-type zinc-finger motif lies at 1–89 (MTRSCSAVGC…LKKGAVPSVS (89 aa)). The HCFC1-binding motif (HBM) signature appears at 123–126 (DHNY).

Active transposase that specifically recognizes the bipartite 5'-TXXGGGX(A/T)-3' consensus motif and mediates transposition. This chain is DNA transposase THAP9 (THAP9), found in Homo sapiens (Human).